Here is a 213-residue protein sequence, read N- to C-terminus: ATP synthase peripheral stalk subunit OSCP, mitochondrial (213 aa).

The transit peptide at 1–23 directs the protein to the mitochondrion; the sequence is MAAPAVSGLSRQVRYFSTSVVRP. The SIFI-degron motif lies at 5 to 23; sequence AVSGLSRQVRYFSTSVVRP. N6-acetyllysine occurs at positions 54, 60, 70, and 73. Lys90 is subject to N6-succinyllysine. 2 positions are modified to N6-acetyllysine; alternate: Lys158 and Lys162. Lys158 and Lys162 each carry N6-succinyllysine; alternate. Residues Lys172, Lys176, and Lys192 each carry the N6-acetyllysine modification. The residue at position 199 (Lys199) is an N6-succinyllysine.

This sequence belongs to the ATPase delta chain family. In terms of assembly, component of the ATP synthase complex composed at least of ATP5F1A/subunit alpha, ATP5F1B/subunit beta, ATP5MC1/subunit c (homooctomer), MT-ATP6/subunit a, MT-ATP8/subunit 8, ATP5ME/subunit e, ATP5MF/subunit f, ATP5MG/subunit g, ATP5MK/subunit k, ATP5MJ/subunit j, ATP5F1C/subunit gamma, ATP5F1D/subunit delta, ATP5F1E/subunit epsilon, ATP5PF/subunit F6, ATP5PB/subunit b, ATP5PD/subunit d, ATP5PO/subunit OSCP. ATP synthase complex consists of a soluble F(1) head domain (subunits alpha(3) and beta(3)) - the catalytic core - and a membrane F(0) domain - the membrane proton channel (subunits c, a, 8, e, f, g, k and j). These two domains are linked by a central stalk (subunits gamma, delta, and epsilon) rotating inside the F1 region and a stationary peripheral stalk (subunits F6, b, d, and OSCP). Post-translationally, acetylation at Lys-162 decreases ATP production. Deacetylated by SIRT3. In terms of processing, in response to mitochondrial stress, the precursor protein is ubiquitinated by the SIFI complex in the cytoplasm before mitochondrial import, leading to its degradation. Within the SIFI complex, UBR4 initiates ubiquitin chain that are further elongated or branched by KCMF1.

The protein localises to the mitochondrion. The protein resides in the mitochondrion inner membrane. Subunit OSCP, of the mitochondrial membrane ATP synthase complex (F(1)F(0) ATP synthase or Complex V) that produces ATP from ADP in the presence of a proton gradient across the membrane which is generated by electron transport complexes of the respiratory chain. ATP synthase complex consist of a soluble F(1) head domain - the catalytic core - and a membrane F(1) domain - the membrane proton channel. These two domains are linked by a central stalk rotating inside the F(1) region and a stationary peripheral stalk. During catalysis, ATP synthesis in the catalytic domain of F(1) is coupled via a rotary mechanism of the central stalk subunits to proton translocation. In vivo, can only synthesize ATP although its ATP hydrolase activity can be activated artificially in vitro. Part of the complex F(0) domain. Part of the complex F(0) domain and the peripheric stalk, which acts as a stator to hold the catalytic alpha(3)beta(3) subcomplex and subunit a/ATP6 static relative to the rotary elements. The sequence is that of ATP synthase peripheral stalk subunit OSCP, mitochondrial from Plecturocebus moloch (Dusky titi monkey).